Here is a 139-residue protein sequence, read N- to C-terminus: Histone H2B (139 aa).

The segment covering 1–10 (MAPKAAEKKP) has biased composition (basic and acidic residues). A disordered region spans residues 1-47 (MAPKAAEKKPSTGGKAPAGGKAPAEKKEAGKKTAASGEKKKRTKARK). 2 positions are modified to N6-acetyllysine; alternate: Lys-8 and Lys-9. Residues Lys-8 and Lys-9 each participate in a glycyl lysine isopeptide (Lys-Gly) (interchain with G-Cter in SUMO); alternate cross-link. Residues 11–22 (STGGKAPAGGKA) are compositionally biased toward low complexity. An N6-acetyllysine modification is found at Lys-15. The residue at position 26 (Lys-26) is an N6-acetyllysine; alternate. Residue Lys-26 forms a Glycyl lysine isopeptide (Lys-Gly) (interchain with G-Cter in SUMO); alternate linkage. Residue Lys-27 forms a Glycyl lysine isopeptide (Lys-Gly) (interchain with G-Cter in SUMO) linkage. A Glycyl lysine isopeptide (Lys-Gly) (interchain with G-Cter in ubiquitin) cross-link involves residue Lys-133.

This sequence belongs to the histone H2B family. As to quaternary structure, the nucleosome is a histone octamer containing two molecules each of H2A, H2B, H3 and H4 assembled in one H3-H4 heterotetramer and two H2A-H2B heterodimers. The octamer wraps approximately 147 bp of DNA. Post-translationally, monoubiquitinated by the UBC2-BRE1 complex to form H2BK123ub1. H2BK123ub1 gives a specific tag for epigenetic transcriptional activation and is also prerequisite for H3K4me and H3K79me formation. H2BK123ub1 also modulates the formation of double-strand breaks during meiosis and is a prerequisite for DNA-damage checkpoint activation. In terms of processing, acetylated by GCN5 to form H2BK11ac and H2BK16ac. H2BK16ac can also be formed by ESA1. Acetylation of N-terminal lysines and particularly formation of H2BK11acK16ac has a positive effect on transcription. Sumoylation to form H2BK6su or H2BK7su, and probably also H2BK16su or H2BK17su, occurs preferentially near the telomeres and represses gene transcription.

It is found in the nucleus. It localises to the chromosome. Core component of nucleosome. Nucleosomes wrap and compact DNA into chromatin, limiting DNA accessibility to the cellular machineries which require DNA as a template. Histones thereby play a central role in transcription regulation, DNA repair, DNA replication and chromosomal stability. DNA accessibility is regulated via a complex set of post-translational modifications of histones, also called histone code, and nucleosome remodeling. This Coccidioides immitis (strain RS) (Valley fever fungus) protein is Histone H2B (HTB1).